The following is a 381-amino-acid chain: E3 ubiquitin-protein ligase KCMF1 (381 aa).

Ser2 carries the post-translational modification N-acetylserine. The residue at position 2 (Ser2) is a Phosphoserine. The ZZ-type zinc finger occupies 4 to 60 (HEGVSCDACLKGNFRGRRYKCLICYDYDLCASCYESGATTTRHTTDHPMQCILTRVD). Zn(2+)-binding residues include Cys9, Cys12, Cys24, Cys27, Cys33, Cys36, His46, and His50. Residues 78–101 (FTCPYCGKMGYTETSLQEHVTSEH) form a C2H2-type zinc finger. The interval 154-193 (MFHPGRGLGGPRARRSNMHFTSSSTGGLSSSQSSYSPSNR) is disordered. A phosphoserine mark is found at Ser169, Ser189, and Ser212. Positions 175 to 191 (SSSTGGLSSSQSSYSPS) are enriched in low complexity. Residues 225–257 (SQLQQLQMQLQLERQHAQAARQQLETARNATRR) are a coiled coil. Positions 294–314 (TRLNDPKMSETERQSMESERA) are disordered. The span at 297–314 (NDPKMSETERQSMESERA) shows a compositional bias: basic and acidic residues. Residues Ser335 and Ser336 each carry the phosphoserine modification.

It belongs to the KCMF1 family. Component of the SIFI complex, composed of KCMF1, UBR4 and calmodulin (CALM1, CALM2 or CALM3). Spleen, small intestine, ovary, peripheral blood, lung, kidney and pancreas. Expressed at low levels in the thymus, prostate, testis, colon, heart, brain, placenta and liver.

The protein resides in the cytoplasm. It is found in the late endosome. Its subcellular location is the lysosome. It carries out the reaction S-ubiquitinyl-[E2 ubiquitin-conjugating enzyme]-L-cysteine + [acceptor protein]-L-lysine = [E2 ubiquitin-conjugating enzyme]-L-cysteine + N(6)-ubiquitinyl-[acceptor protein]-L-lysine.. The protein operates within protein modification; protein ubiquitination. Functionally, E3 ubiquitin-protein ligase which accepts ubiquitin from an E2 ubiquitin-conjugating enzyme and then transfers it to targeted substrates, promoting their degradation by the proteasome. Together with UBR4, component of the N-end rule pathway: ubiquitinates proteins bearing specific N-terminal residues that are destabilizing according to the N-end rule, leading to their degradation. Does not ubiquitinate proteins that are acetylated at the N-terminus. Together with UBR4, part of a protein quality control pathway that catalyzes ubiquitination and degradation of proteins that have been oxidized in response to reactive oxygen species (ROS): recognizes proteins with an Arg-CysO3(H) degron at the N-terminus, and mediates assembly of heterotypic 'Lys-63'-/'Lys-27'-linked branched ubiquitin chains on oxidized proteins, leading to their degradation by autophagy. Catalytic component of the SIFI complex, a multiprotein complex required to inhibit the mitochondrial stress response after a specific stress event has been resolved: ubiquitinates and degrades (1) components of the HRI-mediated signaling of the integrated stress response, such as DELE1 and EIF2AK1/HRI, as well as (2) unimported mitochondrial precursors. Within the SIFI complex, UBR4 initiates ubiquitin chain that are further elongated or branched by KCMF1. This is E3 ubiquitin-protein ligase KCMF1 from Homo sapiens (Human).